A 254-amino-acid chain; its full sequence is rRNA N-glycosylase sapovaccarin-S2 (254 aa).

This sequence belongs to the ribosome-inactivating protein family. Type 1 RIP subfamily. Expressed in seeds; most abundant in the perisperm.

The catalysed reaction is Endohydrolysis of the N-glycosidic bond at one specific adenosine on the 28S rRNA.. In terms of biological role, exhibits N-glycosylase activity. Catalyzes the release of one adenine from a ribosome. Acts as a ribosome-inactivating protein and inhibits protein synthesis. Induces cell death in Huh-7 liver cells. May contribute to the protection against plant pests and predators or play a role in regulating the death of plant cells. This Gypsophila vaccaria (Cow soapwort) protein is rRNA N-glycosylase sapovaccarin-S2.